A 301-amino-acid chain; its full sequence is UDP-N-acetylenolpyruvoylglucosamine reductase 1 (301 aa).

Positions 29–196 constitute an FAD-binding PCMH-type domain; the sequence is KIGGPADILI…LEAEFQLQIG (168 aa). The active site involves Arg174. Catalysis depends on Ser225, which acts as the Proton donor. Glu295 is an active-site residue.

This sequence belongs to the MurB family. FAD serves as cofactor.

It localises to the cytoplasm. The enzyme catalyses UDP-N-acetyl-alpha-D-muramate + NADP(+) = UDP-N-acetyl-3-O-(1-carboxyvinyl)-alpha-D-glucosamine + NADPH + H(+). It participates in cell wall biogenesis; peptidoglycan biosynthesis. Functionally, cell wall formation. The polypeptide is UDP-N-acetylenolpyruvoylglucosamine reductase 1 (Bacillus thuringiensis subsp. konkukian (strain 97-27)).